The sequence spans 274 residues: Diaminopimelate epimerase (274 aa).

3 residues coordinate substrate: asparagine 11, glutamine 44, and asparagine 64. Cysteine 73 (proton donor) is an active-site residue. Substrate is bound by residues 74–75 (GN), asparagine 157, asparagine 190, and 208–209 (ER). The active-site Proton acceptor is cysteine 217. 218–219 (GS) is a binding site for substrate.

It belongs to the diaminopimelate epimerase family. As to quaternary structure, homodimer.

Its subcellular location is the cytoplasm. The catalysed reaction is (2S,6S)-2,6-diaminopimelate = meso-2,6-diaminopimelate. It functions in the pathway amino-acid biosynthesis; L-lysine biosynthesis via DAP pathway; DL-2,6-diaminopimelate from LL-2,6-diaminopimelate: step 1/1. In terms of biological role, catalyzes the stereoinversion of LL-2,6-diaminopimelate (L,L-DAP) to meso-diaminopimelate (meso-DAP), a precursor of L-lysine and an essential component of the bacterial peptidoglycan. This chain is Diaminopimelate epimerase, found in Escherichia coli O6:H1 (strain CFT073 / ATCC 700928 / UPEC).